Here is a 490-residue protein sequence, read N- to C-terminus: Velvet complex subunit 2 (490 aa).

Disordered stretches follow at residues 23 to 148 and 295 to 316; these read LYHH…ESQQ and YQTQPTYSQGSSAYPSNGTYGP. A compositionally biased stretch (basic residues) spans 54-70; that stretch reads PPSHHFQLHPGHGHHQQ. The segment covering 112–131 has biased composition (basic and acidic residues); it reads AAEHRDHPQHALDEPSRSHD. The 311-residue stretch at 164 to 474 folds into the Velvet domain; it reads ATGRRYHLDV…AAQGIKIPIR (311 aa). Residues 295–313 are compositionally biased toward polar residues; that stretch reads YQTQPTYSQGSSAYPSNGT.

It belongs to the velvet family. VelB subfamily. In terms of assembly, component of the heterotrimeric velvet complex composed of LAE1, VEL1 and VEL2; VEL1 acting as a bridging protein between LAE1 and VEL2. Forms a heterodimeric complex with VOS1; the formation of the VEL2-VOS1 complex is light-dependent.

The protein resides in the nucleus. It localises to the cytoplasm. Functionally, component of the velvet transcription factor complex that controls sexual/asexual developmental ratio in response to light, promoting sexual development in the darkness while stimulating asexual sporulation under illumination. The velvet complex acts as a global regulator for secondary metabolite gene expression. Component of the VEL2-VOS1 heterodimeric complex that plays a dual role in activating genes associated with spore maturation and repressing certain development-associated genes. The VEL2-VOS1 complex binds DNA through the DNA-binding domain of VOS1 that recognizes an 11-nucleotide consensus sequence 5'-CTGGCCGCGGC-3' consisting of two motifs in the promoters of key developmental regulatory genes. Regulates expression of cellulase-encoding genes such as the cellobiohydrolase-encoding genes cbh1 and cbh2, the endo-beta-1,4-glucanase-encoding genes egl1 and egl2, and the beta-glucosidase-encoding gene bgl1. The polypeptide is Velvet complex subunit 2 (Hypocrea jecorina (strain QM6a) (Trichoderma reesei)).